The following is an 830-amino-acid chain: Prolactin receptor (830 aa).

The first 23 residues, 1-23 (MKQKLRSSVQIILLFALTAVGLT), serve as a signal peptide directing secretion. Over 24 to 439 (GQSYPGKPKI…QIPTDFRIKD (416 aa)) the chain is Extracellular. Fibronectin type-III domains are found at residues 30 to 128 (KPKI…VQPD), 129 to 228 (APVN…IPNG), 231 to 331 (PPEK…IVQT), and 333 to 434 (PPVN…IPTD). Cysteine 36 and cysteine 46 are disulfide-bonded. Asparagine 59 is a glycosylation site (N-linked (GlcNAc...) asparagine). Cysteine 75 and cysteine 86 are oxidised to a cystine. 8 N-linked (GlcNAc...) asparagine glycosylation sites follow: asparagine 91, asparagine 100, asparagine 112, asparagine 132, asparagine 263, asparagine 304, asparagine 316, and asparagine 336. Zn(2+) contacts are provided by aspartate 415 and histidine 417. Positions 420-424 (WSEWS) match the WSXWS motif motif. Residues 440–460 (MVVWIIVGVLSSLICLVMSWT) form a helical membrane-spanning segment. Residues 461–830 (MVLKGYRMIA…DPSSFIPAFK (370 aa)) lie on the Cytoplasmic side of the membrane. The Box 1 motif motif lies at 472–480 (ILPPVPGPK).

Belongs to the type I cytokine receptor family. Type 1 subfamily.

It is found in the membrane. This is a receptor for the anterior pituitary hormone prolactin. This is Prolactin receptor (PRLR) from Columba livia (Rock dove).